Here is a 328-residue protein sequence, read N- to C-terminus: Cytochrome c biogenesis protein CcsA (328 aa).

The next 8 helical transmembrane spans lie at 13–33, 46–66, 73–93, 101–121, 146–166, 234–254, 263–283, and 295–315; these read ISFSVVSIVLTIYFLTFLVNL, GIVITFFGITGLLFTRWIYSG, LYESLIFLSWAFSIIHMISYF, LNAITAPSAIFIQGFATSGLL, MILGYGALLCGSLLSIALLVI, IISLGFIFLTVGILSGAVWAN, WDPKETWAFITWTIFAIFLHI, and AIVASTGFLLIWICYFGVNLL.

This sequence belongs to the CcmF/CycK/Ccl1/NrfE/CcsA family. As to quaternary structure, may interact with Ccs1.

It localises to the plastid. The protein localises to the chloroplast thylakoid membrane. In terms of biological role, required during biogenesis of c-type cytochromes (cytochrome c6 and cytochrome f) at the step of heme attachment. This is Cytochrome c biogenesis protein CcsA from Arabis hirsuta (Hairy rock-cress).